The following is a 144-amino-acid chain: Ribosome maturation factor RimP (144 aa).

This sequence belongs to the RimP family.

The protein localises to the cytoplasm. Functionally, required for maturation of 30S ribosomal subunits. In Azoarcus sp. (strain BH72), this protein is Ribosome maturation factor RimP.